The primary structure comprises 4466 residues: Dynein beta chain, ciliary (4466 aa).

Residues 1 to 1813 are stem; the sequence is MADVVDPRLE…YANICDAQFK (1813 aa). An ATP-binding site is contributed by 154 to 161; the sequence is AGQVKGKT. Coiled-coil stretches lie at residues 733 to 805, 1036 to 1056, 1306 to 1337, and 1443 to 1468; these read TVLE…WTKQ, TLDQ…EADE, WLEI…AWDA, and LLKS…MTSK. AAA regions lie at residues 1814–2035, 2095–2316, 2422–2669, and 2767–3016; these read YSYE…VLVV, KVVK…VRFK, ELDP…VFQG, and TYNE…ERRY. ATP-binding positions include 1852-1859, 2133-2140, 2460-2467, and 2805-2812; these read GPAGTGKT, GNAGTGKS, GNAGLGKS, and GVGGSGKQ. Coiled coils occupy residues 3033–3092, 3263–3325, and 3573–3642; these read SLLS…QVVG, EPKR…SRTI, and QERP…EEAK. The tract at residues 3033 to 3325 is stalk; sequence SLLSMKSKEL…QEAEATSRTI (293 aa). AAA stretches follow at residues 3409-3636 and 3846-4072; these read LTDD…EISV and VRNF…VLYN.

It belongs to the dynein heavy chain family. As to quaternary structure, consists of at least two heavy chains (alpha and beta), three intermediate chains and several light chains.

It is found in the cell projection. Its subcellular location is the cilium. It localises to the flagellum. The protein localises to the cytoplasm. The protein resides in the cytoskeleton. It is found in the flagellum axoneme. Functionally, force generating protein of eukaryotic cilia and flagella. Produces force towards the minus ends of microtubules. Dynein has ATPase activity; the force-producing power stroke is thought to occur on release of ADP. This is Dynein beta chain, ciliary from Tripneustes gratilla (Hawaian sea urchin).